An 82-amino-acid chain; its full sequence is Protein ImpC (82 aa).

It belongs to the DinI family.

In terms of biological role, the imp operon is involved in UV protection and mutation, however the ImpC protein is not essential for these functions. The polypeptide is Protein ImpC (impC) (Salmonella typhimurium).